Reading from the N-terminus, the 206-residue chain is Urease accessory protein UreG (206 aa).

14–21 (GPVGSGKT) is a binding site for GTP.

This sequence belongs to the SIMIBI class G3E GTPase family. UreG subfamily. Homodimer. UreD, UreF and UreG form a complex that acts as a GTP-hydrolysis-dependent molecular chaperone, activating the urease apoprotein by helping to assemble the nickel containing metallocenter of UreC. The UreE protein probably delivers the nickel.

Its subcellular location is the cytoplasm. Functionally, facilitates the functional incorporation of the urease nickel metallocenter. This process requires GTP hydrolysis, probably effectuated by UreG. In Brucella anthropi (strain ATCC 49188 / DSM 6882 / CCUG 24695 / JCM 21032 / LMG 3331 / NBRC 15819 / NCTC 12168 / Alc 37) (Ochrobactrum anthropi), this protein is Urease accessory protein UreG.